The chain runs to 114 residues: Small nuclear ribonucleoprotein SmD1a (114 aa).

The Sm domain maps to 2 to 74 (KLVRFLMKLN…IRYYILPDSL (73 aa)). Positions 87–114 (VKPKKPVAGKAVGRGRGRGRGRGRGRGR) are disordered. Repeat copies occupy residues 99 to 100 (GR), 101 to 102 (GR), 103 to 104 (GR), 105 to 106 (GR), 107 to 108 (GR), 109 to 110 (GR), 111 to 112 (GR), and 113 to 114 (GR). The tract at residues 99–114 (GRGRGRGRGRGRGRGR) is 8 X 2 AA tandem repeats of G-R.

This sequence belongs to the snRNP core protein family.

Its subcellular location is the nucleus. It localises to the nucleus speckle. It is found in the nucleolus. Its function is as follows. Involved in splicing regulation. Facilitates post-transcriptional gene silencing (PTGS) by limiting the degradation of transgene aberrant RNAs by the RNA quality control (RQC) machinery, thus favoring their entry into cytoplasmic siRNA bodies where they can trigger PTGS. Does not participate in the production of small RNAs. The sequence is that of Small nuclear ribonucleoprotein SmD1a from Arabidopsis thaliana (Mouse-ear cress).